The following is a 233-amino-acid chain: MADS-box protein CMB1 (233 aa).

The MADS-box domain maps to Arg3–Cys58. The region spanning Thr87–Ser177 is the K-box domain.

It is found in the nucleus. This is MADS-box protein CMB1 (CMB1) from Dianthus caryophyllus (Carnation).